The primary structure comprises 115 residues: Large ribosomal subunit protein bL20 (115 aa).

The protein belongs to the bacterial ribosomal protein bL20 family.

Its function is as follows. Binds directly to 23S ribosomal RNA and is necessary for the in vitro assembly process of the 50S ribosomal subunit. It is not involved in the protein synthesizing functions of that subunit. This is Large ribosomal subunit protein bL20 from Prochlorococcus marinus subsp. pastoris (strain CCMP1986 / NIES-2087 / MED4).